The sequence spans 124 residues: Histone H2A, embryonic (124 aa).

Over residues 1 to 18 (MSGRGKSGKARTKAKTRS) the composition is skewed to basic residues. The interval 1-21 (MSGRGKSGKARTKAKTRSSRA) is disordered. Position 2 is an N-acetylserine (serine 2). Residue serine 2 is modified to Phosphoserine. Glutamine 104 carries the N5-methylglutamine modification. Residue lysine 119 forms a Glycyl lysine isopeptide (Lys-Gly) (interchain with G-Cter in ubiquitin) linkage.

The protein belongs to the histone H2A family. The nucleosome is a histone octamer containing two molecules each of H2A, H2B, H3 and H4 assembled in one H3-H4 heterotetramer and two H2A-H2B heterodimers. The octamer wraps approximately 147 bp of DNA. Post-translationally, monoubiquitination of Lys-119 gives a specific tag for epigenetic transcriptional repression. Phosphorylation of Ser-2 directly represses transcription.

The protein localises to the nucleus. Its subcellular location is the chromosome. In terms of biological role, core component of nucleosome. Nucleosomes wrap and compact DNA into chromatin, limiting DNA accessibility to the cellular machineries which require DNA as a template. Histones thereby play a central role in transcription regulation, DNA repair, DNA replication and chromosomal stability. DNA accessibility is regulated via a complex set of post-translational modifications of histones, also called histone code, and nucleosome remodeling. In Psammechinus miliaris (Green sea urchin), this protein is Histone H2A, embryonic.